A 210-amino-acid chain; its full sequence is UPF0301 protein Mnod_6933 (210 aa).

This sequence belongs to the UPF0301 (AlgH) family.

This chain is UPF0301 protein Mnod_6933, found in Methylobacterium nodulans (strain LMG 21967 / CNCM I-2342 / ORS 2060).